Consider the following 145-residue polypeptide: FAD synthase (145 aa).

Residues 9–10, 14–17, aspartate 94, and tyrosine 122 each bind ATP; these read TF and HPGH.

The protein belongs to the archaeal FAD synthase family. As to quaternary structure, homodimer. The cofactor is a divalent metal cation.

It catalyses the reaction FMN + ATP + H(+) = FAD + diphosphate. It functions in the pathway cofactor biosynthesis; FAD biosynthesis; FAD from FMN: step 1/1. Its function is as follows. Catalyzes the transfer of the AMP portion of ATP to flavin mononucleotide (FMN) to produce flavin adenine dinucleotide (FAD) coenzyme. This chain is FAD synthase, found in Methanocaldococcus infernus (strain DSM 11812 / JCM 15783 / ME).